Here is a 165-residue protein sequence, read N- to C-terminus: ATP synthase subunit b (165 aa).

The helical transmembrane segment at 10-30 (LIFWMLLSFGIVFAVLAKYGF) threads the bilayer.

It belongs to the ATPase B chain family. As to quaternary structure, F-type ATPases have 2 components, F(1) - the catalytic core - and F(0) - the membrane proton channel. F(1) has five subunits: alpha(3), beta(3), gamma(1), delta(1), epsilon(1). F(0) has three main subunits: a(1), b(2) and c(10-14). The alpha and beta chains form an alternating ring which encloses part of the gamma chain. F(1) is attached to F(0) by a central stalk formed by the gamma and epsilon chains, while a peripheral stalk is formed by the delta and b chains.

It is found in the cell inner membrane. F(1)F(0) ATP synthase produces ATP from ADP in the presence of a proton or sodium gradient. F-type ATPases consist of two structural domains, F(1) containing the extramembraneous catalytic core and F(0) containing the membrane proton channel, linked together by a central stalk and a peripheral stalk. During catalysis, ATP synthesis in the catalytic domain of F(1) is coupled via a rotary mechanism of the central stalk subunits to proton translocation. Its function is as follows. Component of the F(0) channel, it forms part of the peripheral stalk, linking F(1) to F(0). This chain is ATP synthase subunit b, found in Bacteroides fragilis (strain ATCC 25285 / DSM 2151 / CCUG 4856 / JCM 11019 / LMG 10263 / NCTC 9343 / Onslow / VPI 2553 / EN-2).